The sequence spans 330 residues: MTTATGTKPKKMEAFKMERGVKYRDAAKTSVIQVRNIDPDQELLPKPSWMKIKLPAASAKIDSIKHGMRRHGLHSVCEEASCPNLHECFNHGTATFMIMGAICTRRCPFCDVAHGKPLPLDPEEPRKVAETVQDMKLKYVVITSVDRDDLADRGAAHFAATVREIKALNPECKVEILVPDFRGRVEQAVEILKQNPPDVFNHNLENVPRLYREVRPGADYKWSLELLKIFKQEFPNIPTKSGLMVGLGETNEEILEVMQDLRDHGVTMLTIGQYLQPSRHHLKVERYVPPEEFDMFRSEAERMGFEHAACGPFVRSSYHADLQAKGELVK.

Residues cysteine 77, cysteine 82, cysteine 88, cysteine 103, cysteine 107, cysteine 110, and serine 317 each contribute to the [4Fe-4S] cluster site. The region spanning 89–306 (FNHGTATFMI…RSEAERMGFE (218 aa)) is the Radical SAM core domain.

Belongs to the radical SAM superfamily. Lipoyl synthase family. [4Fe-4S] cluster serves as cofactor.

The protein resides in the cytoplasm. It catalyses the reaction [[Fe-S] cluster scaffold protein carrying a second [4Fe-4S](2+) cluster] + N(6)-octanoyl-L-lysyl-[protein] + 2 oxidized [2Fe-2S]-[ferredoxin] + 2 S-adenosyl-L-methionine + 4 H(+) = [[Fe-S] cluster scaffold protein] + N(6)-[(R)-dihydrolipoyl]-L-lysyl-[protein] + 4 Fe(3+) + 2 hydrogen sulfide + 2 5'-deoxyadenosine + 2 L-methionine + 2 reduced [2Fe-2S]-[ferredoxin]. Its pathway is protein modification; protein lipoylation via endogenous pathway; protein N(6)-(lipoyl)lysine from octanoyl-[acyl-carrier-protein]: step 2/2. In terms of biological role, catalyzes the radical-mediated insertion of two sulfur atoms into the C-6 and C-8 positions of the octanoyl moiety bound to the lipoyl domains of lipoate-dependent enzymes, thereby converting the octanoylated domains into lipoylated derivatives. The chain is Lipoyl synthase from Actinobacillus pleuropneumoniae serotype 5b (strain L20).